Reading from the N-terminus, the 144-residue chain is Ferredoxin-thioredoxin reductase catalytic chain, chloroplastic (144 aa).

Residues 1–31 constitute a chloroplast transit peptide; that stretch reads MKALQASIAYSFPISSPAASPRRFSRVIRAQ. Position 83 (C83) interacts with [4Fe-4S] cluster. Catalysis depends on C85, which acts as the Nucleophile. Cysteines 85 and 115 form a disulfide. Residues C102, C104, and C113 each coordinate [4Fe-4S] cluster.

The protein belongs to the ferredoxin thioredoxin reductase beta subunit family. In terms of assembly, heterodimer of subunit A (variable subunit) and subunit B (catalytic subunit). Heterodimeric FTR forms a complex with ferredoxin and thioredoxin. [4Fe-4S] cluster serves as cofactor.

The protein localises to the plastid. It localises to the chloroplast. It catalyses the reaction [thioredoxin]-disulfide + 2 reduced [2Fe-2S]-[ferredoxin] + 2 H(+) = [thioredoxin]-dithiol + 2 oxidized [2Fe-2S]-[ferredoxin]. Functionally, catalytic subunit of the ferredoxin-thioredoxin reductase (FTR), which catalyzes the two-electron reduction of thioredoxins by the electrons provided by reduced ferredoxin. The protein is Ferredoxin-thioredoxin reductase catalytic chain, chloroplastic (FTRC) of Spinacia oleracea (Spinach).